Reading from the N-terminus, the 86-residue chain is Acyl carrier protein (86 aa).

In terms of domain architecture, Carrier spans 2-82 (ATVFERVKKV…AVVDYLKSKG (81 aa)). Serine 37 is subject to O-(pantetheine 4'-phosphoryl)serine.

Belongs to the acyl carrier protein (ACP) family. In terms of processing, 4'-phosphopantetheine is transferred from CoA to a specific serine of apo-ACP by AcpS. This modification is essential for activity because fatty acids are bound in thioester linkage to the sulfhydryl of the prosthetic group.

It localises to the cytoplasm. It participates in lipid metabolism; fatty acid biosynthesis. Functionally, carrier of the growing fatty acid chain in fatty acid biosynthesis. In Dehalococcoides mccartyi (strain ATCC BAA-2100 / JCM 16839 / KCTC 5957 / BAV1), this protein is Acyl carrier protein.